Consider the following 183-residue polypeptide: Inner membrane-spanning protein YciB (183 aa).

The next 5 helical transmembrane spans lie at 19-39, 53-73, 76-96, 121-141, and 151-171; these read LYGVQQAAITLVIATVIQLIV, IMGIFVVFFGILTAYFNDLNF, WKVTIINGLFAAVLLVSQFVF, LGWAGFFIICMLLNIVISYYF, and TFGFTGLSLIAAIATGVYLYP.

The protein belongs to the YciB family.

It localises to the cell inner membrane. Plays a role in cell envelope biogenesis, maintenance of cell envelope integrity and membrane homeostasis. This chain is Inner membrane-spanning protein YciB, found in Actinobacillus pleuropneumoniae serotype 7 (strain AP76).